The sequence spans 327 residues: Ran-specific GTPase-activating protein 2 (327 aa).

Disordered stretches follow at residues 1 to 96 and 109 to 205; these read MSET…KKED and GFGV…KQEV. Positions 24 to 83 are enriched in basic and acidic residues; it reads PIDKLDGTPKRPREKDQDEQAEETSDKSEAPNKNDEEKKEEGKKDQEPSHKKIKVDDGKT. Residue T31 is modified to Phosphothreonine. The span at 122-133 shows a compositional bias: polar residues; that stretch reads ATTSTESLPASD. Low complexity predominate over residues 140–152; the sequence is FAFGSGLSFGSGF. Basic and acidic residues-rich tracts occupy residues 157-179 and 189-205; these read NKTE…KVHS and EDTK…KQEV. S179 is modified (phosphoserine). Positions 191–327 constitute a RanBD1 domain; it reads TKDKPKPLKL…YNIIVKSVPK (137 aa).

In terms of assembly, interacts with GSP1, XPO1 and SRM1.

It is found in the nucleus. Its function is as follows. Important for the export of protein containing nuclear export signal (NES) out of the nucleus. Stimulates the GTPase activity of GSP1. The sequence is that of Ran-specific GTPase-activating protein 2 (YRB2) from Saccharomyces cerevisiae (strain ATCC 204508 / S288c) (Baker's yeast).